A 283-amino-acid polypeptide reads, in one-letter code: 4-diphosphocytidyl-2-C-methyl-D-erythritol kinase (283 aa).

The active site involves Lys13. An ATP-binding site is contributed by 96–106; it reads PMGGGIGGGSS. Residue Asp138 is part of the active site.

This sequence belongs to the GHMP kinase family. IspE subfamily.

It carries out the reaction 4-CDP-2-C-methyl-D-erythritol + ATP = 4-CDP-2-C-methyl-D-erythritol 2-phosphate + ADP + H(+). It functions in the pathway isoprenoid biosynthesis; isopentenyl diphosphate biosynthesis via DXP pathway; isopentenyl diphosphate from 1-deoxy-D-xylulose 5-phosphate: step 3/6. In terms of biological role, catalyzes the phosphorylation of the position 2 hydroxy group of 4-diphosphocytidyl-2C-methyl-D-erythritol. The polypeptide is 4-diphosphocytidyl-2-C-methyl-D-erythritol kinase (Pseudomonas fluorescens (strain SBW25)).